A 150-amino-acid polypeptide reads, in one-letter code: SsrA-binding protein (150 aa).

The segment at 129–150 is disordered; the sequence is KRQTLKSKEADREMARALRDRH.

The protein belongs to the SmpB family.

The protein resides in the cytoplasm. In terms of biological role, required for rescue of stalled ribosomes mediated by trans-translation. Binds to transfer-messenger RNA (tmRNA), required for stable association of tmRNA with ribosomes. tmRNA and SmpB together mimic tRNA shape, replacing the anticodon stem-loop with SmpB. tmRNA is encoded by the ssrA gene; the 2 termini fold to resemble tRNA(Ala) and it encodes a 'tag peptide', a short internal open reading frame. During trans-translation Ala-aminoacylated tmRNA acts like a tRNA, entering the A-site of stalled ribosomes, displacing the stalled mRNA. The ribosome then switches to translate the ORF on the tmRNA; the nascent peptide is terminated with the 'tag peptide' encoded by the tmRNA and targeted for degradation. The ribosome is freed to recommence translation, which seems to be the essential function of trans-translation. The chain is SsrA-binding protein from Syntrophotalea carbinolica (strain DSM 2380 / NBRC 103641 / GraBd1) (Pelobacter carbinolicus).